Consider the following 319-residue polypeptide: Cytochrome f (319 aa).

The N-terminal stretch at 1 to 34 (MQNRNTYEWAKKMTRLISVLVMIHIITRTSISNA) is a signal peptide. Residues Tyr-35, Cys-55, Cys-58, and His-59 each coordinate heme. Residues 287-304 (GLLLFLASVILAQIFLVL) traverse the membrane as a helical segment.

This sequence belongs to the cytochrome f family. In terms of assembly, the 4 large subunits of the cytochrome b6-f complex are cytochrome b6, subunit IV (17 kDa polypeptide, petD), cytochrome f and the Rieske protein, while the 4 small subunits are PetG, PetL, PetM and PetN. The complex functions as a dimer. Heme is required as a cofactor.

The protein resides in the plastid. It localises to the chloroplast thylakoid membrane. Component of the cytochrome b6-f complex, which mediates electron transfer between photosystem II (PSII) and photosystem I (PSI), cyclic electron flow around PSI, and state transitions. In Pinus thunbergii (Japanese black pine), this protein is Cytochrome f (petA).